Here is a 305-residue protein sequence, read N- to C-terminus: MAGINSILQTFEGLGEGDRAETIKVLSDMMREGTPRQPAKKKVNGFMGYRSYYSSMFSQLPQKERSPILTTLWQQDPFHKEWDFMCAVYSAIRDQLAEQNVTLQTWIQFAVTPLGIAPRTGYMEALGWVLTRLDDGTHTLQRMDVPDIRYHLQPMNGLGLFLSCLNGGLPIFDPQNIISQLSDPAFDVICINTQVPKIPGTFDTMSGFRQLAKQNPALAMSSLFQLPDTDPLIAQGVGMYEFHSVVSQPVQNHGMPPTTVPPMESHSHEDNMDFAKINEAELDAILTMYDTNTNGYIDPNKPQGF.

The alpha box DNA-binding region spans 38 to 93 (PAKKKVNGFMGYRSYYSSMFSQLPQKERSPILTTLWQQDPFHKEWDFMCAVYSAIR).

The protein belongs to the MATALPHA1 family.

The protein resides in the nucleus. In terms of biological role, controls fertilization, probably by determining the mating type. May be involved in the post-fertilization steps of the sexual cycle besides mat+. It is required for the developmental events that occur in the female organ after fertilization. This chain is Mat- sexual cell fertilization-promoting factor (FMR1), found in Podospora anserina (Pleurage anserina).